The sequence spans 1485 residues: Cystic fibrosis transmembrane conductance regulator (1485 aa).

The Cytoplasmic portion of the chain corresponds to 1–78; it reads MQRSPVEDAN…SLLRAMARCY (78 aa). The chain crosses the membrane as a helical span at residues 79–99; the sequence is IKPFLLFGFLLYIGEATKTVQ. In terms of domain architecture, ABC transmembrane type-1 1 spans 83–353; it reads LLFGFLLYIG…CMVLRMTVTR (271 aa). The Extracellular portion of the chain corresponds to 100–123; the sequence is PQLLGRIIASFDPAHEPERANGYF. A helical transmembrane segment spans residues 124–149; sequence LAFGLGLLFTARFLLLQPAMFGLHHL. Residues 150 to 195 lie on the Cytoplasmic side of the membrane; the sequence is GMQIRIALFSIIYKKTLKLSSRVLDKISTGQLVSLMSANLGKFDQS. A helical transmembrane segment spans residues 196 to 216; the sequence is LGMAHFIWISPLQCILCTGLI. The Extracellular portion of the chain corresponds to 217 to 224; sequence WELIDVNS. The helical transmembrane segment at 225–245 threads the bilayer; it reads FCALAAISLLGVLQAFLSHKM. Residues 246–299 lie on the Cytoplasmic side of the membrane; it reads GPYKAQKVLLTNKRLALTSEIMENLHSVKAYGWEEIMETLIKNIRQDEVKLTRK. The chain crosses the membrane as a helical span at residues 300 to 320; the sequence is IGSLRYFYSSAYFFSAIFVIV. Over 321–340 the chain is Extracellular; that stretch reads AAVVPHALSRGINLRRIFTT. The chain crosses the membrane as a helical span at residues 341–363; that stretch reads LSYCMVLRMTVTRQLPGSIQMWY. At 364–856 the chain is on the cytoplasmic side; the sequence is DTMRLIWKIE…YVRYVSNNKS (493 aa). ATP contacts are provided by residues Trp-402, 457–464, and Gln-492; that span reads GSMGSGKS. The 222-residue stretch at 424-645 folds into the ABC transporter 1 domain; the sequence is NGDAGLFFTN…RPDFSSLLLG (222 aa). Residues 653-826 form a disordered R region region; the sequence is SAERRCSILT…GILEEENIEA (174 aa). The chain crosses the membrane as a helical span at residues 857–877; it reads LLYVLIFILFIAAIEIAGSVA. Positions 860–1163 constitute an ABC transmembrane type-1 2 domain; it reads VLIFILFIAA…CVATSIAVDG (304 aa). Topologically, residues 878 to 924 are extracellular; the sequence is GIFLITDELWREEHQRSEPNMTKHSNASSSGQTYAITVTPTSSYYIL. N-linked (GlcNAc...) asparagine glycosylation is found at Asn-897 and Asn-903. Residues 925-946 traverse the membrane as a discontinuously helical segment; sequence YIYVATSESLLAMGFFRGLPFV. Residues 947-996 lie on the Cytoplasmic side of the membrane; that stretch reads HTTITISKKLHQKMLHAVLSAPMSVLNTMKTGRIMNRFTKDMATIDDMLP. The helical transmembrane segment at 997-1019 threads the bilayer; the sequence is LLMFDFVQLTVVVVGCILVVSIV. The Extracellular portion of the chain corresponds to 1020 to 1021; sequence RP. Residues 1022-1042 traverse the membrane as a helical segment; sequence YIFLAATPLAIIFIVMRKYFL. Topologically, residues 1043-1103 are cytoplasmic; it reads RTGQQLKQLE…TATWFLYLST (61 aa). Residues 1104–1124 traverse the membrane as a helical segment; sequence LRWFLFRADILFVFFFTLAAW. Topologically, residues 1125–1138 are extracellular; the sequence is IAVGTNQDKPGEIG. A helical membrane pass occupies residues 1139–1159; the sequence is IIICLAMLILGTFQWCVATSI. At 1160–1485 the chain is on the cytoplasmic side; sequence AVDGMMRSVD…AEDNIQDTRL (326 aa). The ABC transporter 2 domain occupies 1211–1444; that stretch reads IEVRNLTVKY…TSHLKQAISP (234 aa). Residues Tyr-1220 and 1245-1252 each bind ATP; that span reads GRTGSGKS. The segment at 1452 to 1485 is disordered; that stretch reads PRRNSSMRTPQSKLSSVTQTLQEEAEDNIQDTRL. Residues 1454 to 1473 are compositionally biased toward polar residues; it reads RNSSMRTPQSKLSSVTQTLQ. Acidic residues predominate over residues 1474-1485; the sequence is EEAEDNIQDTRL. Positions 1483–1485 match the PDZ-binding motif; it reads TRL.

The protein belongs to the ABC transporter superfamily. ABCC family. CFTR transporter (TC 3.A.1.202) subfamily. In terms of assembly, monomer; does not require oligomerization for channel activity. Interacts with cse1l; this interaction may down-regulate cftr activity. Phosphorylated; this activates the channel. Dephosphorylation strongly decreases ATPase activity. Phosphorylation at PKA sites activates the channel. Phosphorylation at PKC sites enhances the response to phosphorylation by PKA. In terms of tissue distribution, detected in gut epithelium (at protein level). Detected in kidney, spleen, intestine and liver. Detected in pancreatic duct epithelium at 5 dpf and throughout adult life.

It localises to the apical cell membrane. The protein localises to the early endosome membrane. The protein resides in the cell membrane. Its subcellular location is the recycling endosome membrane. It is found in the endoplasmic reticulum membrane. It catalyses the reaction ATP + H2O + closed Cl(-) channel = ADP + phosphate + open Cl(-) channel.. The enzyme catalyses chloride(in) = chloride(out). The catalysed reaction is hydrogencarbonate(in) = hydrogencarbonate(out). It carries out the reaction ATP + H2O = ADP + phosphate + H(+). In terms of biological role, epithelial ion channel that plays an important role in the regulation of epithelial ion and water transport and fluid homeostasis. Mediates the transport of chloride ions across the cell membrane. Possesses an intrinsic ATPase activity and utilizes ATP to gate its channel; the passive flow of anions through the channel is gated by cycles of ATP binding and hydrolysis by the ATP-binding domains. The ion channel is also permeable to HCO(3)(-); selectivity depends on the extracellular chloride concentration. Exerts its function also by modulating the activity of other ion channels and transporters. Contributes to the regulation of the pH and the ion content of the epithelial fluid layer. Required for normal fluid homeostasis in the gut. Required for normal volume expansion and cell shape changes of Kupffer's vesicle during embryonic development and for normal establishment of left-right body patterning. Required for normal resistance to infection by P.aeruginosa strain PA14 and strain SMC573. In Danio rerio (Zebrafish), this protein is Cystic fibrosis transmembrane conductance regulator.